A 595-amino-acid polypeptide reads, in one-letter code: Tumor necrosis factor receptor superfamily member 8 (595 aa).

The first 18 residues, 1–18 (MRVLLAALGLLFLGALRA), serve as a signal peptide directing secretion. The Extracellular portion of the chain corresponds to 19–385 (FPQDRPFEDT…STGKPVLDAG (367 aa)). 3 TNFR-Cys repeats span residues 28 to 66 (TCHGNPSHYYDKAVRRCCYRCPMGLFPTQQCPQRPTDCR), 68 to 106 (QCEPDYYLDEADRCTACVTCSRDDLVEKTPCAWNSSRVC), and 107 to 150 (ECRP…TVCE). Cystine bridges form between cysteine 29/cysteine 44, cysteine 45/cysteine 58, cysteine 48/cysteine 65, cysteine 69/cysteine 81, cysteine 84/cysteine 98, cysteine 87/cysteine 106, cysteine 108/cysteine 122, and cysteine 131/cysteine 149. Asparagine 32 carries an N-linked (GlcNAc...) asparagine glycan. The N-linked (GlcNAc...) asparagine glycan is linked to asparagine 101. The interval 167–238 (KEPSSGTIPQ…PTQPCPEGSG (72 aa)) is disordered. A compositionally biased stretch (low complexity) spans 179 to 194 (PTPVSPATSSASTMPV). 3 TNFR-Cys repeats span residues 205–241 (ASKLTRAPDSPSSVGRPSSDPGLSPTQPCPEGSGDCR), 243–281 (QCEPDYYLDEAGRCTACVSCSRDDLVEKTPCAWNSSRTC), and 282–325 (ECRP…TTFE). 6 disulfide bridges follow: cysteine 233–cysteine 240, cysteine 244–cysteine 256, cysteine 259–cysteine 273, cysteine 262–cysteine 281, cysteine 283–cysteine 297, and cysteine 289–cysteine 300. N-linked (GlcNAc...) asparagine glycosylation is present at asparagine 276. The disordered stretch occupies residues 323–355 (TFEAPPLGTQPDCNPTPENGEAPASTSPTQSLL). A glycan (N-linked (GlcNAc...) asparagine) is linked at asparagine 336. A compositionally biased stretch (polar residues) spans 346–355 (ASTSPTQSLL). A helical membrane pass occupies residues 386-406 (PVLFWVILVLVVVVGSSAFLL). The Cytoplasmic segment spans residues 407-595 (CHRRACRKRI…DPLPTAASGK (189 aa)). Serine 438 and serine 452 each carry phosphoserine. Disordered regions lie at residues 438 to 457 (SRPRRSSTQLRSGASVTEPV), 485 to 509 (LQDASPAGGPSSPRDLPEPRVSTEH), and 536 to 595 (EGRG…ASGK). The segment covering 443–452 (SSTQLRSGAS) has biased composition (polar residues). The span at 499 to 509 (DLPEPRVSTEH) shows a compositional bias: basic and acidic residues.

Belongs to the TNFR8 family. Interacts with TRAF1, TRAF2, TRAF3 and TRAF5. Phosphorylated on serine and tyrosine residues. Isoform 2 is constitutively phosphorylated. In terms of tissue distribution, detected in alveolar macrophages (at protein level).

The protein resides in the cell membrane. It is found in the cytoplasm. In terms of biological role, receptor for TNFSF8/CD30L. May play a role in the regulation of cellular growth and transformation of activated lymphoblasts. Regulates gene expression through activation of NF-kappa-B. This Homo sapiens (Human) protein is Tumor necrosis factor receptor superfamily member 8.